A 297-amino-acid polypeptide reads, in one-letter code: Alpha-tubulin N-acetyltransferase 1 (297 aa).

Residues 1-186 (MEFDFDVHKI…NNFVVFDGFF (186 aa)) enclose the N-acetyltransferase domain. Residues 120 to 133 (FYIH…GFGK) and 156 to 165 (SEKFLSFLRK) contribute to the acetyl-CoA site. Positions 269–297 (LHRTANSEQEDHSQRRRTSSLNRPQSIHH) are disordered. The span at 287 to 297 (SSLNRPQSIHH) shows a compositional bias: polar residues.

This sequence belongs to the acetyltransferase ATAT1 family.

It localises to the cytoplasm. The protein localises to the membrane. The protein resides in the clathrin-coated pit. It is found in the cell junction. Its subcellular location is the focal adhesion. It localises to the cell projection. The protein localises to the axon. The protein resides in the cytoskeleton. It is found in the spindle. It catalyses the reaction L-lysyl-[alpha-tubulin] + acetyl-CoA = N(6)-acetyl-L-lysyl-[alpha-tubulin] + CoA + H(+). Functionally, specifically acetylates 'Lys-40' in alpha-tubulin on the lumenal side of microtubules. Promotes microtubule destabilization and accelerates microtubule dynamics; this activity may be independent of acetylation activity. Acetylates alpha-tubulin with a slow enzymatic rate, due to a catalytic site that is not optimized for acetyl transfer. Enters the microtubule through each end and diffuses quickly throughout the lumen of microtubules. Acetylates only long/old microtubules because of its slow acetylation rate since it does not have time to act on dynamically unstable microtubules before the enzyme is released. May be involved in neuron development. In Xenopus tropicalis (Western clawed frog), this protein is Alpha-tubulin N-acetyltransferase 1.